The following is a 207-amino-acid chain: High frequency lysogenization protein HflD homolog (207 aa).

The protein belongs to the HflD family.

It localises to the cytoplasm. It is found in the cell inner membrane. In Pseudomonas fluorescens (strain SBW25), this protein is High frequency lysogenization protein HflD homolog.